The sequence spans 521 residues: MIKQALISVSDKTGIVDFAKALSGLGVKLLSTGGTAKLLADAGLPVTEVADYTGFPEMLDGRVKTLHPKVHGGILARRDLPEHMQALEAHGIPTIDLLVVNLYPFVQTIAKDDCTLADAIENIDIGGPTMLRSAAKNHRDVTVVVDPADYAVVLDEMKANGNTVGYKTNFRLATKVFAHTAQYDGAITNYLTSLGDDLQHGSRNAYPATLNLAFDKVQDLRYGENPHQSAAFYRDVATPAGALANYRQLQGKELSYNNIADSDAAWECVKTFDAPACVIIKHANPCGVAVGADAGEAYAKAFQTDPTSAFGGIIAFNREVDEVAAQAVAKQFVEVLIAPSFSEAAKQVFAAKQNVRLLEIALGEGHNAFDLKRVGGGLLVQSLDSKNVQPRELRVVTKRHPTPKEMDDLLFAWRVAKYVKSNAIVFCGNGMTLGVGAGQMSRVDSARIASIKAQNAGLTLAGSAVASDAFFPFRDGLDVVVAAGATCVIQPGGSVRDDEVIAAADEHNIAMVMTGVRHFRH.

The MGS-like domain occupies 1 to 145 (MIKQALISVS…KNHRDVTVVV (145 aa)).

This sequence belongs to the PurH family.

It catalyses the reaction (6R)-10-formyltetrahydrofolate + 5-amino-1-(5-phospho-beta-D-ribosyl)imidazole-4-carboxamide = 5-formamido-1-(5-phospho-D-ribosyl)imidazole-4-carboxamide + (6S)-5,6,7,8-tetrahydrofolate. The catalysed reaction is IMP + H2O = 5-formamido-1-(5-phospho-D-ribosyl)imidazole-4-carboxamide. The protein operates within purine metabolism; IMP biosynthesis via de novo pathway; 5-formamido-1-(5-phospho-D-ribosyl)imidazole-4-carboxamide from 5-amino-1-(5-phospho-D-ribosyl)imidazole-4-carboxamide (10-formyl THF route): step 1/1. It functions in the pathway purine metabolism; IMP biosynthesis via de novo pathway; IMP from 5-formamido-1-(5-phospho-D-ribosyl)imidazole-4-carboxamide: step 1/1. In Burkholderia thailandensis (strain ATCC 700388 / DSM 13276 / CCUG 48851 / CIP 106301 / E264), this protein is Bifunctional purine biosynthesis protein PurH.